Consider the following 724-residue polypeptide: Protein BCH1 (724 aa).

The segment covering 51–65 has biased composition (low complexity); that stretch reads TTATASANDNGATSN. The disordered stretch occupies residues 51–71; sequence TTATASANDNGATSNINGQDP. Residues 711–724 are CHS5-binding; that stretch reads LNFLKNFTNDTFDN.

It belongs to the CHAPS family. In terms of assembly, component of the CHS5/6 complex composed of the 4 CHAPS proteins BCH1, BCH2, BUD7, and CHS6 as well as at least CHS5 and GTP-bound ARF1. The complex interacts with the cargo protein CHS3.

The protein resides in the golgi apparatus. It is found in the trans-Golgi network membrane. In terms of biological role, member of the CHS5-ARF1P-binding proteins (CHAPS) which mediates export of specific cargo proteins, including chitin synthase CHS3. This chain is Protein BCH1 (BCH1), found in Saccharomyces cerevisiae (strain ATCC 204508 / S288c) (Baker's yeast).